Here is a 406-residue protein sequence, read N- to C-terminus: Olfactomedin-like protein 3 (406 aa).

The N-terminal stretch at Met-1–Gly-21 is a signal peptide. The stretch at Gln-22–Asn-101 forms a coiled coil. The Olfactomedin-like domain occupies Asp-134 to Lys-401. Residues Cys-135 and Cys-328 are joined by a disulfide bond. An N-linked (GlcNAc...) asparagine glycan is attached at Asn-248.

This sequence belongs to the OLFML3 family.

Its subcellular location is the secreted. Its function is as follows. Secreted scaffold protein that plays an essential role in dorsoventral patterning during early development. Stabilizes axial formation by restricting chordin (CHRD) activity on the dorsal side. Acts by facilitating the association between the tolloid proteases and their substrate chordin (CHRD), leading to enhance chordin (CHRD) degradation. May have matrix-related function involved in placental and embryonic development, or play a similar role in other physiological processes. The sequence is that of Olfactomedin-like protein 3 (Olfml3) from Rattus norvegicus (Rat).